Here is a 291-residue protein sequence, read N- to C-terminus: MASLKDLRNRIASVKATQKITKAMQMVAAAKLRRAQMAAEAARPYAERMDTVLGNLAAGIVGAGQAPVLIAGTGQSQKHLLLVCTGERGLCGAFNTSIVRLAREKAQQLIGEGKDVTFFCVGRKGYDQLRRTYPDRIIELVDLRSVRTLSFKNASDIASKILTLLDQGAFDVCTLFYSNFKSVISQIPTAQQIIPAVFEAQDEGEGGPVYEYEPAEEDILADLLPRNIAVQIFRALLENQASFYGSQMSAMDNATRNAGDMIKKQTLIYNRTRQAMITKELIEIISGAEAL.

The protein belongs to the ATPase gamma chain family. F-type ATPases have 2 components, CF(1) - the catalytic core - and CF(0) - the membrane proton channel. CF(1) has five subunits: alpha(3), beta(3), gamma(1), delta(1), epsilon(1). CF(0) has three main subunits: a, b and c.

It is found in the cell inner membrane. Its function is as follows. Produces ATP from ADP in the presence of a proton gradient across the membrane. The gamma chain is believed to be important in regulating ATPase activity and the flow of protons through the CF(0) complex. This Xanthobacter autotrophicus (strain ATCC BAA-1158 / Py2) protein is ATP synthase gamma chain.